We begin with the raw amino-acid sequence, 179 residues long: GTP-dependent dephospho-CoA kinase (179 aa).

Residues Asp-49, Val-50, Val-51, Asp-68, Lys-70, and Glu-126 each contribute to the GTP site.

Belongs to the GTP-dependent DPCK family.

The catalysed reaction is 3'-dephospho-CoA + GTP = GDP + CoA + H(+). Its pathway is cofactor biosynthesis; coenzyme A biosynthesis. In terms of biological role, catalyzes the GTP-dependent phosphorylation of the 3'-hydroxyl group of dephosphocoenzyme A to form coenzyme A (CoA). The polypeptide is GTP-dependent dephospho-CoA kinase (Pyrococcus abyssi (strain GE5 / Orsay)).